Here is a 334-residue protein sequence, read N- to C-terminus: GTP 3',8-cyclase (334 aa).

Positions 13-239 (RFHRKFYYLR…KVKAANDGPA (227 aa)) constitute a Radical SAM core domain. Residue Arg22 coordinates GTP. Positions 29 and 33 each coordinate [4Fe-4S] cluster. Residue Tyr35 participates in S-adenosyl-L-methionine binding. Residue Cys36 participates in [4Fe-4S] cluster binding. Arg73 contributes to the GTP binding site. Residue Gly77 coordinates S-adenosyl-L-methionine. Residue Thr104 coordinates GTP. S-adenosyl-L-methionine is bound at residue Ser128. Lys165 is a binding site for GTP. Met199 lines the S-adenosyl-L-methionine pocket. Cys262 and Cys265 together coordinate [4Fe-4S] cluster. Position 267 to 269 (267 to 269 (RLR)) interacts with GTP. [4Fe-4S] cluster is bound at residue Cys279.

It belongs to the radical SAM superfamily. MoaA family. As to quaternary structure, monomer and homodimer. [4Fe-4S] cluster serves as cofactor.

The enzyme catalyses GTP + AH2 + S-adenosyl-L-methionine = (8S)-3',8-cyclo-7,8-dihydroguanosine 5'-triphosphate + 5'-deoxyadenosine + L-methionine + A + H(+). Its pathway is cofactor biosynthesis; molybdopterin biosynthesis. Catalyzes the cyclization of GTP to (8S)-3',8-cyclo-7,8-dihydroguanosine 5'-triphosphate. The chain is GTP 3',8-cyclase from Vibrio vulnificus (strain YJ016).